Reading from the N-terminus, the 556-residue chain is 2-succinyl-5-enolpyruvyl-6-hydroxy-3-cyclohexene-1-carboxylate synthase (556 aa).

The protein belongs to the TPP enzyme family. MenD subfamily. As to quaternary structure, homodimer. Mg(2+) is required as a cofactor. Requires Mn(2+) as cofactor. It depends on thiamine diphosphate as a cofactor.

The catalysed reaction is isochorismate + 2-oxoglutarate + H(+) = 5-enolpyruvoyl-6-hydroxy-2-succinyl-cyclohex-3-ene-1-carboxylate + CO2. Its pathway is quinol/quinone metabolism; 1,4-dihydroxy-2-naphthoate biosynthesis; 1,4-dihydroxy-2-naphthoate from chorismate: step 2/7. The protein operates within quinol/quinone metabolism; menaquinone biosynthesis. In terms of biological role, catalyzes the thiamine diphosphate-dependent decarboxylation of 2-oxoglutarate and the subsequent addition of the resulting succinic semialdehyde-thiamine pyrophosphate anion to isochorismate to yield 2-succinyl-5-enolpyruvyl-6-hydroxy-3-cyclohexene-1-carboxylate (SEPHCHC). In Enterobacter sp. (strain 638), this protein is 2-succinyl-5-enolpyruvyl-6-hydroxy-3-cyclohexene-1-carboxylate synthase.